The chain runs to 948 residues: MASISDDGMALSGYLKKLKTMKKKFFVLYEETSNSSARLEYYDTEKKFLQRAEPKRVIYLKNCFNINRRLDTKQRFVIVLSSRDGGFGIVLESENDLRKWLDKLLVLQRNIANTNGTAYSPYDQVWQVVIQKKGISEKVGITGTYHCCLTSKSLTFVCIGPDKTPNGEERVASIEILLTTIRRCGHASPQCIFYVELGRQSVLGSGDLWMETDNAAVATNMHNTILSAMSAKTESNTNLINVYQNRPDLSHEPMRKRSSSANEASKPINVNVIQNSQNSLDLRSCSSPHNYGFGRERCDSLPTRNGTLSESSNQTYFGSNHGLRSNTISGIRPHSSNKHSNSPTFTMPLRCSASEESSISIEESDDNGSFSHYRLNTRSSETAIPEENIDDFASAEFSKVSEQNESDENYIPMTPINPTDAIHEKEKVDMQRLEDGSLHFDFPEHASEKLARDFDLDSDNQCGRPIRAYSIGNKVEHLKFNKRLGHLNDTGQNPNRVRAYSVGSKSKIPRCDLQRVVLVEDNKHEFAANRSQSSITKEGTSYSTSSNRQKKSTSAPLLSLKNHINSDRMSDLMEIDFSQATNLEKQKFIKNNEIPKYIENVFPKTPRTDSSSLTLHATSQKDIFNGTKLNNTVNASEEGYLEMKPVGNAYTPSSNCLPIKVEKLKISDYTAPLTTAAPVHDLNKISAYNISAEKWKEQSLCEEKKSNSPLNETPCSLKPTDVESNSHDEHSTNNMECEVSVQCDKQNNLDDKVAENNNLDIGGHEEKKLVHSISSEDYTQIKDKSNDFTKFNEAGYKILQIKSDSSLISLKLYQKGIHKDNLERSHRLTESVNTIPDNATASSSVTKFNINTKAADSRSTDPSTPQNILQIKDLNFPSRSSSRISQPELHYASLDLPHCSGQNPAKYLKRGSRESPPVSACPGDGNTYAKIDFDQSDSSSSSSNIFNT.

In terms of domain architecture, PH spans 8–109 (GMALSGYLKK…WLDKLLVLQR (102 aa)). Residues 122–236 (YDQVWQVVIQ…SAMSAKTESN (115 aa)) form the IRS-type PTB domain. The tract at residues 247–270 (PDLSHEPMRKRSSSANEASKPINV) is disordered. Residues S286 and S287 each carry the phosphoserine modification. Positions 304–329 (RNGTLSESSNQTYFGSNHGLRSNTIS) are enriched in polar residues. The segment at 304-373 (RNGTLSESSN…SDDNGSFSHY (70 aa)) is disordered. The residue at position 342 (S342) is a Phosphoserine. Y410 carries the phosphotyrosine; by INSR modification. The YXXM motif 1 signature appears at 410–413 (YIPM). The disordered stretch occupies residues 528 to 559 (ANRSQSSITKEGTSYSTSSNRQKKSTSAPLLS). Residues 529-556 (NRSQSSITKEGTSYSTSSNRQKKSTSAP) are compositionally biased toward polar residues. Residue S554 is modified to Phosphoserine. The YXXM motif 2 motif lies at 640–643 (YLEM). A disordered region spans residues 703 to 734 (EKKSNSPLNETPCSLKPTDVESNSHDEHSTNN). Basic and acidic residues predominate over residues 720–731 (TDVESNSHDEHS). Y891 bears the Phosphotyrosine; by INSR mark. Residues 907–948 (YLKRGSRESPPVSACPGDGNTYAKIDFDQSDSSSSSSNIFNT) are disordered. S912 and S915 each carry phosphoserine. Y928 carries the phosphotyrosine; by INSR modification. Low complexity predominate over residues 936-948 (SDSSSSSSNIFNT).

In terms of assembly, bindings to phosphatidylinositol 3-kinase and SHP2.

In terms of biological role, activates phosphatidylinositol 3-kinase when bound to the regulatory p85 subunit. May mediate the control of various cellular processes by insulin-like peptides. When phosphorylated by the insulin receptor binds specifically to various cellular proteins containing SH2 domains. Involved in control of cell proliferation, cell size, and body and organ growth throughout development. Also has a role in a signaling pathway controlling the physiological response required to endure periods of low nutrient conditions. Insulin/insulin-like growth factor (IGF) signaling pathway has a role in regulating aging and is necessary in the ovary for vitellogenic maturation. The protein is Insulin receptor substrate 1 of Drosophila erecta (Fruit fly).